A 317-amino-acid polypeptide reads, in one-letter code: Ribose-phosphate pyrophosphokinase (317 aa).

ATP is bound by residues 41-43 (DME) and 100-101 (RQ). Mg(2+) is bound by residues His-134 and Asp-174. Lys-197 is an active-site residue. D-ribose 5-phosphate is bound by residues Arg-199, Asp-223, and 227–231 (DSGGT).

This sequence belongs to the ribose-phosphate pyrophosphokinase family. Class I subfamily. In terms of assembly, homohexamer. It depends on Mg(2+) as a cofactor.

It is found in the cytoplasm. The enzyme catalyses D-ribose 5-phosphate + ATP = 5-phospho-alpha-D-ribose 1-diphosphate + AMP + H(+). It participates in metabolic intermediate biosynthesis; 5-phospho-alpha-D-ribose 1-diphosphate biosynthesis; 5-phospho-alpha-D-ribose 1-diphosphate from D-ribose 5-phosphate (route I): step 1/1. In terms of biological role, involved in the biosynthesis of the central metabolite phospho-alpha-D-ribosyl-1-pyrophosphate (PRPP) via the transfer of pyrophosphoryl group from ATP to 1-hydroxyl of ribose-5-phosphate (Rib-5-P). This Bradyrhizobium diazoefficiens (strain JCM 10833 / BCRC 13528 / IAM 13628 / NBRC 14792 / USDA 110) protein is Ribose-phosphate pyrophosphokinase.